The chain runs to 362 residues: MVTSAMGPSPRVEELARSGLDTIPKDYVRPEEELKSIIGNILAEEKSSEGPQLPTIDLEEMDSRDEEGRKKCHEELKKAATDWGVMHLINHGIPEELIDRVKAAGKEFFELPVEEKEAYANDQAAGNVQGYGSKLANNASGQLEWEDYFFHCVYPEHKTDLSIWPTKPPDYIPATSEYAKQLRALATKILSVLSIGLGLEKGRLEKEVGGAEDLIVQMKINFYPKCPQPELALGWEAHTDVSALTFILHNMVPGLQLFYEDKWVTAKCVPNSIIMHIGDTLEILSNGKYKSILHRGLVNKEKVRISWAVFCEPPKEKIVLQPLPETVSEVEPPRFPPRTFAQHLKHKLFRKTDGDLDEKPTY.

The disordered stretch occupies residues 1 to 23; the sequence is MVTSAMGPSPRVEELARSGLDTI. In terms of domain architecture, Fe2OG dioxygenase spans 214 to 313; sequence LIVQMKINFY…RISWAVFCEP (100 aa). The Fe cation site is built by His238, Asp240, and His294. Arg304 is an active-site residue.

The protein belongs to the iron/ascorbate-dependent oxidoreductase family. The cofactor is Fe cation. It depends on L-ascorbate as a cofactor. Expressed in red but not in green forma of P.frutescens. In red forma, it is predominantly expressed in stems and leaves, but not in roots.

It catalyses the reaction a (2R,3S,4S)-leucoanthocyanidin + 2-oxoglutarate + O2 = a 4-H-anthocyanidin with a 3-hydroxy group + succinate + CO2 + 2 H2O. The protein operates within pigment biosynthesis; anthocyanin biosynthesis. Its function is as follows. Oxidation of leucoanthocyanidins into anthocyanidins. The protein is Leucoanthocyanidin dioxygenase (ANS) of Perilla frutescens (Beefsteak mint).